The primary structure comprises 698 residues: Quillaic acid 3-O-glycosyltransferase CSL1 (698 aa).

A helical membrane pass occupies residues 14–34; the sequence is ALLSRLHILFHSALVASVFYY. A glycan (N-linked (GlcNAc...) asparagine) is linked at asparagine 38. Residues 42 to 62 form a helical membrane-spanning segment; that stretch reads GPAWALMTFAELTLAFIWALT. Residues lysine 99 and glutamate 100 each coordinate UDP-alpha-D-glucose. Aspartate 129 is an active-site residue. N-linked (GlcNAc...) asparagine glycosylation is present at asparagine 317. Serine 436 is a catalytic residue. The next 6 helical transmembrane spans lie at 478-498, 508-528, 546-566, 581-601, 636-656, and 669-689; these read WTSG…YAMS, YAYF…GVVL, WLLA…YEVL, IWII…MLNK, MFMV…FGGL, and FAQL…MEEI.

It belongs to the glycosyltransferase 2 family. Plant cellulose synthase-like G subfamily. Mainly expressed in flowers and flower buds and, to a lesser extent, in leaves, stems and roots.

It localises to the golgi apparatus membrane. Its pathway is secondary metabolite biosynthesis; terpenoid biosynthesis. Functionally, component of the oleanane-type triterpene saponins (e.g. saponarioside A and saponarioside B) biosynthetic pathway, leading to the production of natural products with detergent properties used as traditional sources of soap. Glycosyltransferase that mediates the conversion of quillaic acid (QA) to QA-mono via the initiation of the C-3 sugar chain. In Saponaria officinalis (Common soapwort), this protein is Quillaic acid 3-O-glycosyltransferase CSL1.